The sequence spans 447 residues: Na(+)-translocating NADH-quinone reductase subunit A (447 aa).

Belongs to the NqrA family. As to quaternary structure, composed of six subunits; NqrA, NqrB, NqrC, NqrD, NqrE and NqrF.

The catalysed reaction is a ubiquinone + n Na(+)(in) + NADH + H(+) = a ubiquinol + n Na(+)(out) + NAD(+). In terms of biological role, NQR complex catalyzes the reduction of ubiquinone-1 to ubiquinol by two successive reactions, coupled with the transport of Na(+) ions from the cytoplasm to the periplasm. NqrA to NqrE are probably involved in the second step, the conversion of ubisemiquinone to ubiquinol. The chain is Na(+)-translocating NADH-quinone reductase subunit A from Neisseria meningitidis serogroup B (strain ATCC BAA-335 / MC58).